A 1393-amino-acid chain; its full sequence is Protein strawberry notch homolog 1 (1393 aa).

The segment at 129–148 (STRPSVSAPTVRNAMTSAPS) is disordered. Residue Ser148 is modified to Phosphoserine. N6-acetyllysine is present on Lys149. Phosphoserine occurs at positions 162 and 214. At Lys413 the chain carries N6-acetyllysine. Positions 687-840 (APSNNSSPRD…ANSNTNSNSS (154 aa)) are disordered. Ser692, Ser693, and Ser697 each carry phosphoserine. Positions 697–716 (SPCKENKIKKRKGEEITREA) are enriched in basic and acidic residues. Residues 733–747 (SGSESDASDNEESDY) show a composition bias toward acidic residues. 3 positions are modified to phosphoserine: Ser754, Ser755, and Ser768. Residues 756-775 (GDDDDFNPFLDESNEDDEND) are compositionally biased toward acidic residues. Positions 781–793 (KDHKKNKEKKKKK) are enriched in basic residues. Phosphoserine is present on residues Ser794 and Ser815. Residues 824–840 (PAPNSTPANSNTNSNSS) are compositionally biased toward low complexity. Residues 843–870 (TSQDAVERAQQMKKDLLDKLEKLAEDLP) are a coiled coil. Lys1222 carries the N6-acetyllysine modification. Ser1386 carries the post-translational modification Phosphoserine.

Belongs to the SBNO family.

The protein resides in the nucleus. In terms of biological role, plays a crucial role in the regulation of neural stem cells (NSCs) proliferation. Enhances the phosphorylation of GSK3B through the PI3K-Akt signaling pathway, thereby upregulating the Wnt/beta-catenin signaling pathway and promoting the proliferation of NSCs. Improves ischemic stroke recovery while inhibiting neuroinflammation through small extracellular vesicles (sEVs)-mediated mechanism. Enhances the secretion of sEVs from NSCs, which in turn inhibit both the MAPK and NF-kappaB pathways in microglia. This inhibition suppresses the pro-inflammatory M1 polarization of microglia, promoting a shift towards the M2 anti-inflammatory phenotype, which is beneficial for reducing neuroinflammation. The chain is Protein strawberry notch homolog 1 (SBNO1) from Homo sapiens (Human).